The chain runs to 155 residues: Protein LOL2 (155 aa).

M1 carries the N-acetylmethionine modification. The interval 1–35 is disordered; the sequence is MEEIQQQTQKEEQKHREEEEEEEEGPPPGWESAVL. Putative zinc finger regions lie at residues 60 to 90 and 98 to 128; these read QMVC…VNLV and QVNC…VTDI. The interval 130 to 155 is disordered; the sequence is ENNKRPPWSEQQGPLKSLSSLRRAEN. A compositionally biased stretch (polar residues) spans 138–149; that stretch reads SEQQGPLKSLSS.

The protein resides in the nucleus. Its function is as follows. Putative zinc finger that may be involved in programmed cell death and defense response. The polypeptide is Protein LOL2 (LOL2) (Arabidopsis thaliana (Mouse-ear cress)).